The sequence spans 132 residues: Small ribosomal subunit protein uS8 (132 aa).

This sequence belongs to the universal ribosomal protein uS8 family. As to quaternary structure, part of the 30S ribosomal subunit. Contacts proteins S5 and S12.

Functionally, one of the primary rRNA binding proteins, it binds directly to 16S rRNA central domain where it helps coordinate assembly of the platform of the 30S subunit. The polypeptide is Small ribosomal subunit protein uS8 (Desulforamulus reducens (strain ATCC BAA-1160 / DSM 100696 / MI-1) (Desulfotomaculum reducens)).